The chain runs to 327 residues: Metal-binding protein YtgA (327 aa).

Positions 1–20 (MDAKMGYIFKVMRWIFCFVA) are cleaved as a signal peptide. Residues H73, H139, H205, and D297 each contribute to the Fe(2+) site.

Belongs to the bacterial solute-binding protein 9 family. As to quaternary structure, monomer.

It localises to the periplasm. Part of the ATP-binding cassette (ABC) transport system YtgABCD involved in metal import. Binds Fe(2+), Mn(2+) and Ni(2+), with a preference for Fe(2+) and delivers them to the membrane permease for translocation into the cytoplasm. This Chlamydia pneumoniae (Chlamydophila pneumoniae) protein is Metal-binding protein YtgA.